Consider the following 193-residue polypeptide: MIGRIAGTLIEKNPPHLLVDCHGVGYEIDVPMSTFYNLPATGEKVVLLTQQIVREDAHLLYGFGTAAERETFRQLIKISGIGARIALAVLSGMSVAELAQAVTLQEAGRLTRIPGIGKKTAERLLLELKGKLGADLGTVPGGPAVSDDAVDVLNALLALGYSDKEAALAIKQVPAGTGVSEGIKLALKALSKG.

The segment at 1-64 is domain I; it reads MIGRIAGTLI…EDAHLLYGFG (64 aa). The tract at residues 65 to 143 is domain II; that stretch reads TAAERETFRQ…ADLGTVPGGP (79 aa). Positions 144–151 are flexible linker; the sequence is AVSDDAVD. The domain III stretch occupies residues 151–193; the sequence is DVLNALLALGYSDKEAALAIKQVPAGTGVSEGIKLALKALSKG.

Belongs to the RuvA family. In terms of assembly, homotetramer. Forms an RuvA(8)-RuvB(12)-Holliday junction (HJ) complex. HJ DNA is sandwiched between 2 RuvA tetramers; dsDNA enters through RuvA and exits via RuvB. An RuvB hexamer assembles on each DNA strand where it exits the tetramer. Each RuvB hexamer is contacted by two RuvA subunits (via domain III) on 2 adjacent RuvB subunits; this complex drives branch migration. In the full resolvosome a probable DNA-RuvA(4)-RuvB(12)-RuvC(2) complex forms which resolves the HJ.

It localises to the cytoplasm. Functionally, the RuvA-RuvB-RuvC complex processes Holliday junction (HJ) DNA during genetic recombination and DNA repair, while the RuvA-RuvB complex plays an important role in the rescue of blocked DNA replication forks via replication fork reversal (RFR). RuvA specifically binds to HJ cruciform DNA, conferring on it an open structure. The RuvB hexamer acts as an ATP-dependent pump, pulling dsDNA into and through the RuvAB complex. HJ branch migration allows RuvC to scan DNA until it finds its consensus sequence, where it cleaves and resolves the cruciform DNA. The chain is Holliday junction branch migration complex subunit RuvA from Ralstonia pickettii (strain 12J).